Here is a 361-residue protein sequence, read N- to C-terminus: Endo-1,4-beta-xylanase 2 (361 aa).

Residues 1 to 26 (MHFSTITAALALLGLGAATPTDYSTS) form the signal peptide. The region spanning 46-354 (IGTALTIRDD…KPAYSSVLKT (309 aa)) is the GH10 domain. Asn88 and Asn130 each carry an N-linked (GlcNAc...) asparagine glycan. Glu160 (proton donor) is an active-site residue. Glu276 serves as the catalytic Nucleophile. Cys304 and Cys310 form a disulfide bridge.

Belongs to the glycosyl hydrolase 10 (cellulase F) family.

The protein localises to the secreted. The enzyme catalyses Endohydrolysis of (1-&gt;4)-beta-D-xylosidic linkages in xylans.. It functions in the pathway glycan degradation; xylan degradation. Functionally, endo-1,4-beta-xylanase involved in the hydrolysis of xylan, a major structural heterogeneous polysaccharide found in plant biomass representing the second most abundant polysaccharide in the biosphere, after cellulose. Hydrolyzes birch-wood xylan, with a similar activity toward oat-spelt xylan. Also shows weak activities toward pNP-beta-D-cellobioside and pNP-beta-D-xylopyranoside, but no detectable activity toward carboxymethyl cellulose and pNP-beta-L-arabinofuranoside.-. This is Endo-1,4-beta-xylanase 2 (xynII) from Aureobasidium pullulans (Black yeast).